The following is a 274-amino-acid chain: Purine nucleoside phosphorylase YlmD (274 aa).

Leu46–His47 serves as a coordination point for inosine. His80, Cys125, His142, Cys182, Cys183, Cys242, and Cys245 together coordinate Zn(2+). Inosine is bound at residue Arg262.

This sequence belongs to the purine nucleoside phosphorylase YfiH/LACC1 family. It depends on Zn(2+) as a cofactor.

The catalysed reaction is adenosine + phosphate = alpha-D-ribose 1-phosphate + adenine. The enzyme catalyses S-methyl-5'-thioadenosine + phosphate = 5-(methylsulfanyl)-alpha-D-ribose 1-phosphate + adenine. It catalyses the reaction inosine + phosphate = alpha-D-ribose 1-phosphate + hypoxanthine. It carries out the reaction adenosine + H2O + H(+) = inosine + NH4(+). In terms of biological role, purine nucleoside enzyme that catalyzes the phosphorolysis of adenosine and inosine nucleosides, yielding D-ribose 1-phosphate and the respective free bases, adenine and hypoxanthine. Also catalyzes the phosphorolysis of S-methyl-5'-thioadenosine into adenine and S-methyl-5-thio-alpha-D-ribose 1-phosphate. Also has adenosine deaminase activity. This chain is Purine nucleoside phosphorylase YlmD, found in Geobacillus stearothermophilus (strain DSM 13240 / CIP 106956 / 10).